The sequence spans 98 residues: Citrate lyase acyl carrier protein (98 aa).

An O-(phosphoribosyl dephospho-coenzyme A)serine modification is found at Ser14.

This sequence belongs to the CitD family. Oligomer with a subunit composition of (alpha,beta,gamma)6.

Its subcellular location is the cytoplasm. Functionally, covalent carrier of the coenzyme of citrate lyase. This Vibrio cholerae serotype O1 (strain ATCC 39315 / El Tor Inaba N16961) protein is Citrate lyase acyl carrier protein.